The sequence spans 210 residues: Proteasome subunit beta (210 aa).

Residues 1–9 (MDNDKHLKG) constitute a propeptide, removed in mature form; by autocatalysis. The active-site Nucleophile is Thr10.

The protein belongs to the peptidase T1B family. In terms of assembly, the 20S proteasome core is composed of 14 alpha and 14 beta subunits that assemble into four stacked heptameric rings, resulting in a barrel-shaped structure. The two inner rings, each composed of seven catalytic beta subunits, are sandwiched by two outer rings, each composed of seven alpha subunits. The catalytic chamber with the active sites is on the inside of the barrel. Has a gated structure, the ends of the cylinder being occluded by the N-termini of the alpha-subunits. Is capped at one or both ends by the proteasome regulatory ATPase, PAN.

The protein resides in the cytoplasm. The enzyme catalyses Cleavage of peptide bonds with very broad specificity.. The formation of the proteasomal ATPase PAN-20S proteasome complex, via the docking of the C-termini of PAN into the intersubunit pockets in the alpha-rings, triggers opening of the gate for substrate entry. Interconversion between the open-gate and close-gate conformations leads to a dynamic regulation of the 20S proteasome proteolysis activity. In terms of biological role, component of the proteasome core, a large protease complex with broad specificity involved in protein degradation. The protein is Proteasome subunit beta of Methanohalophilus mahii (strain ATCC 35705 / DSM 5219 / SLP).